Here is a 919-residue protein sequence, read N- to C-terminus: Coiled-coil domain-containing protein 66 (919 aa).

Disordered stretches follow at residues 145-166 (KEET…KDEN), 456-505 (ERDR…RERE), 724-744 (ERNN…LPSP), and 762-816 (LKSD…EPSH). Residues 150–161 (QDSLHLNNTSNQ) are compositionally biased toward polar residues. The stretch at 467–558 (HQKAITAQVE…EQRIRELAQK (92 aa)) forms a coiled coil. The tract at residues 570-919 (GGYGLDDVSG…NQEENFNSSF (350 aa)) is mediates localization to cilia, centrosomes and spindle microtubules and the interaction with PCM1, CEP290, CEP104 and CSPP1.

In terms of assembly, homodimer; disulfide-linked. Interacts with CEP290. Interacts with PCM1. Interacts with ARMC9, TOGARAM1, CSPP1 and CEP104. Interacts with CDK5RAP2, CEP152, CEP192, TBG1 and PRC1. Expressed in retina and blood. Expressed in retina, mainly in photoreceptors but also in outer plexiform and ganglion cell layers (at protein level).

It is found in the cytoplasm. It localises to the cytoskeleton. The protein localises to the microtubule organizing center. The protein resides in the centrosome. Its subcellular location is the centriolar satellite. It is found in the cell projection. It localises to the cilium. The protein localises to the cilium basal body. The protein resides in the cilium axoneme. Its subcellular location is the photoreceptor inner segment. It is found in the photoreceptor outer segment. Its function is as follows. Microtubule-binding protein required for ciliogenesis. May function in ciliogenesis by mediating the transport of proteins like BBS4 to the cilium, but also through the organization of the centriolar satellites. Required for the assembly of signaling-competent cilia with proper structure and length. Mediates this function in part by regulating transition zone assembly and basal body recruitment of the IFT-B complex. Cooperates with the ciliopathy proteins CSPP1 and CEP104 during cilium length regulation. Plays two important roles during cell division. First, is required for mitotic progression via regulation of spindle assembly, organization and orientation, levels of spindle microtubules (MTs), kinetochore-fiber integrity, and chromosome alignment. Second, functions during cytokinesis in part by regulating assembly and organization of central spindle and midbody MTs. Plays a role in retina morphogenesis and/or homeostasis. The sequence is that of Coiled-coil domain-containing protein 66 (CCDC66) from Canis lupus familiaris (Dog).